A 519-amino-acid chain; its full sequence is Cytochrome P450 52A12 (519 aa).

Cysteine 467 provides a ligand contact to heme.

It belongs to the cytochrome P450 family. Heme serves as cofactor.

The protein resides in the membrane. Its function is as follows. Together with an NADPH cytochrome P450 the enzyme system catalyzes the terminal hydroxylation as the first step in the assimilation of alkanes and fatty acids. The polypeptide is Cytochrome P450 52A12 (CYP52A12) (Debaryomyces hansenii (Yeast)).